We begin with the raw amino-acid sequence, 82 residues long: Small ribosomal subunit protein eS21 (82 aa).

Belongs to the eukaryotic ribosomal protein eS21 family.

In Cyanophora paradoxa, this protein is Small ribosomal subunit protein eS21 (RPS21).